The sequence spans 246 residues: Probable transcriptional regulatory protein AHA_1522 (246 aa).

It belongs to the TACO1 family.

The protein resides in the cytoplasm. The chain is Probable transcriptional regulatory protein AHA_1522 from Aeromonas hydrophila subsp. hydrophila (strain ATCC 7966 / DSM 30187 / BCRC 13018 / CCUG 14551 / JCM 1027 / KCTC 2358 / NCIMB 9240 / NCTC 8049).